The following is a 236-amino-acid chain: MAGSGELKLLGVWSSPYAIRVRVVLNLKSLPYEYVEENLGDKSDLLLASNPVHKSVPVLLHAGRPVNESQVIVQYIDEVWPGGAGGRPSVMPSDPYERAVARFWAAYVDDKVRPAWLAILFGSKTEEERAAAVAQAVAALETLEGAFGECSKGKPFFGGDGVGFVDVVLGGYLGWFTAIDKLIGRRLIDPARTPALAAWEERFRATDAAKGVVPDDADKLLEFRQTLLRWSASKAK.

The region spanning 5-84 (GELKLLGVWS…YIDEVWPGGA (80 aa)) is the GST N-terminal domain. Residues serine 15, lysine 42, valine 56, and 68–69 (ES) each bind glutathione. Residues 94–228 (DPYERAVARF…KLLEFRQTLL (135 aa)) form the GST C-terminal domain.

It belongs to the GST superfamily. Tau family. As to expression, expressed in seedling shoots and roots.

The enzyme catalyses RX + glutathione = an S-substituted glutathione + a halide anion + H(+). Conjugation of reduced glutathione to a wide number of exogenous and endogenous hydrophobic electrophiles. This chain is Probable glutathione S-transferase GSTU6 (GSTU6), found in Oryza sativa subsp. japonica (Rice).